The sequence spans 174 residues: Shikimate kinase (174 aa).

15–20 (GTGKST) is an ATP binding site. S19 is a Mg(2+) binding site. Substrate contacts are provided by D37, R61, and G82. ATP is bound at residue R120. R138 is a substrate binding site.

Belongs to the shikimate kinase family. In terms of assembly, monomer. Mg(2+) serves as cofactor.

It localises to the cytoplasm. It catalyses the reaction shikimate + ATP = 3-phosphoshikimate + ADP + H(+). It functions in the pathway metabolic intermediate biosynthesis; chorismate biosynthesis; chorismate from D-erythrose 4-phosphate and phosphoenolpyruvate: step 5/7. Its function is as follows. Catalyzes the specific phosphorylation of the 3-hydroxyl group of shikimic acid using ATP as a cosubstrate. The protein is Shikimate kinase of Staphylococcus aureus (strain MRSA252).